The following is a 284-amino-acid chain: Urease accessory protein UreD (284 aa).

The segment at 1–28 (MQSEQQAIGASGCEDAQQPVRQQRARGR) is disordered.

The protein belongs to the UreD family. As to quaternary structure, ureD, UreF and UreG form a complex that acts as a GTP-hydrolysis-dependent molecular chaperone, activating the urease apoprotein by helping to assemble the nickel containing metallocenter of UreC. The UreE protein probably delivers the nickel.

It is found in the cytoplasm. Its function is as follows. Required for maturation of urease via the functional incorporation of the urease nickel metallocenter. This Agrobacterium fabrum (strain C58 / ATCC 33970) (Agrobacterium tumefaciens (strain C58)) protein is Urease accessory protein UreD.